The primary structure comprises 284 residues: Diaminopimelate epimerase (284 aa).

Asparagine 20, glutamine 53, and asparagine 73 together coordinate substrate. The active-site Proton donor is cysteine 82. Residues 83 to 84 (GN), asparagine 167, asparagine 200, and 218 to 219 (ER) contribute to the substrate site. Cysteine 227 functions as the Proton acceptor in the catalytic mechanism. Substrate is bound at residue 228–229 (GS).

This sequence belongs to the diaminopimelate epimerase family. As to quaternary structure, homodimer.

It localises to the cytoplasm. It carries out the reaction (2S,6S)-2,6-diaminopimelate = meso-2,6-diaminopimelate. The protein operates within amino-acid biosynthesis; L-lysine biosynthesis via DAP pathway; DL-2,6-diaminopimelate from LL-2,6-diaminopimelate: step 1/1. Functionally, catalyzes the stereoinversion of LL-2,6-diaminopimelate (L,L-DAP) to meso-diaminopimelate (meso-DAP), a precursor of L-lysine and an essential component of the bacterial peptidoglycan. This is Diaminopimelate epimerase from Xanthomonas campestris pv. campestris (strain ATCC 33913 / DSM 3586 / NCPPB 528 / LMG 568 / P 25).